Consider the following 362-residue polypeptide: Phenylalanine--tRNA ligase alpha subunit (362 aa).

E263 contributes to the Mg(2+) binding site.

Belongs to the class-II aminoacyl-tRNA synthetase family. Phe-tRNA synthetase alpha subunit type 1 subfamily. Tetramer of two alpha and two beta subunits. Mg(2+) is required as a cofactor.

It localises to the cytoplasm. The enzyme catalyses tRNA(Phe) + L-phenylalanine + ATP = L-phenylalanyl-tRNA(Phe) + AMP + diphosphate + H(+). This Caulobacter sp. (strain K31) protein is Phenylalanine--tRNA ligase alpha subunit.